A 314-amino-acid polypeptide reads, in one-letter code: Acetaldehyde dehydrogenase 2 (314 aa).

15–18 (SGNI) contributes to the NAD(+) binding site. C133 acts as the Acyl-thioester intermediate in catalysis. Residues 164–172 (SAGPGTRAN) and N291 each bind NAD(+).

It belongs to the acetaldehyde dehydrogenase family.

The catalysed reaction is acetaldehyde + NAD(+) + CoA = acetyl-CoA + NADH + H(+). This Pseudomonas putida (strain ATCC 700007 / DSM 6899 / JCM 31910 / BCRC 17059 / LMG 24140 / F1) protein is Acetaldehyde dehydrogenase 2.